The primary structure comprises 141 residues: Hemoglobin subunit alpha-A (141 aa).

Positions 1–141 (MLSASDKANV…VGLVLTAKYR (141 aa)) constitute a Globin domain. Residue His58 coordinates O2. Residue His87 participates in heme b binding.

Belongs to the globin family. There are three forms of hemoglobin in Sphenodon: A, A' and D. Hb A is a tetramer of two alpha-A and two beta-1, Hb A' is a tetramer of two alpha-a and two beta-2, Hb D is a tetramer of two alpha-D and two beta-2. Red blood cells.

Functionally, involved in oxygen transport from the lung to the various peripheral tissues. This is Hemoglobin subunit alpha-A (HBAA) from Sphenodon punctatus (Tuatara).